The following is a 143-amino-acid chain: Transcriptional regulator MraZ (143 aa).

2 SpoVT-AbrB domains span residues 5–47 and 76–119; these read EYQH…PQDE and ATEC…SKER.

It belongs to the MraZ family. Forms oligomers.

It is found in the cytoplasm. Its subcellular location is the nucleoid. This Brevibacillus brevis (strain 47 / JCM 6285 / NBRC 100599) protein is Transcriptional regulator MraZ.